Consider the following 721-residue polypeptide: Glucans biosynthesis glucosyltransferase H (721 aa).

The next 6 membrane-spanning stretches (helical) occupy residues 52–72, 97–117, 412–432, 459–479, 505–525, and 570–590; these read CSWR…FAIF, NFCW…VLAS, SPFW…AHFI, FYIT…LLMF, ALVA…ILFG, and LLAW…LSGI.

The protein belongs to the glycosyltransferase 2 family. OpgH subfamily.

The protein resides in the cell inner membrane. It participates in glycan metabolism; osmoregulated periplasmic glucan (OPG) biosynthesis. Involved in the biosynthesis of osmoregulated periplasmic glucans (OPGs). The sequence is that of Glucans biosynthesis glucosyltransferase H from Vibrio cholerae serotype O1 (strain ATCC 39541 / Classical Ogawa 395 / O395).